A 496-amino-acid chain; its full sequence is Glycerol kinase (496 aa).

T12 lines the ADP pocket. Residues T12, T13, and S14 each contribute to the ATP site. A sn-glycerol 3-phosphate-binding site is contributed by T12. ADP is bound at residue R16. Positions 82, 83, and 134 each coordinate sn-glycerol 3-phosphate. R82, E83, and Y134 together coordinate glycerol. H230 is modified (phosphohistidine; by HPr). D244 provides a ligand contact to sn-glycerol 3-phosphate. Glycerol-binding residues include D244 and Q245. ADP is bound by residues T266 and G309. 4 residues coordinate ATP: T266, G309, Q313, and G410. Residues G410 and N414 each contribute to the ADP site.

Belongs to the FGGY kinase family. In terms of assembly, homotetramer and homodimer (in equilibrium). In terms of processing, the phosphoenolpyruvate-dependent sugar phosphotransferase system (PTS), including enzyme I, and histidine-containing protein (HPr) are required for the phosphorylation, which leads to the activation of the enzyme.

It carries out the reaction glycerol + ATP = sn-glycerol 3-phosphate + ADP + H(+). The protein operates within polyol metabolism; glycerol degradation via glycerol kinase pathway; sn-glycerol 3-phosphate from glycerol: step 1/1. Its activity is regulated as follows. Activated by phosphorylation and inhibited by fructose 1,6-bisphosphate (FBP). Key enzyme in the regulation of glycerol uptake and metabolism. Catalyzes the phosphorylation of glycerol to yield sn-glycerol 3-phosphate. In Geobacillus kaustophilus (strain HTA426), this protein is Glycerol kinase.